The following is a 397-amino-acid chain: Phosphoglycerate kinase (397 aa).

Substrate is bound by residues 21 to 23 (DFN), R36, 59 to 62 (HLGR), R118, and R151. Residues K202, G293, E324, and 353 to 356 (GGDS) each bind ATP.

This sequence belongs to the phosphoglycerate kinase family. In terms of assembly, monomer.

The protein resides in the cytoplasm. It carries out the reaction (2R)-3-phosphoglycerate + ATP = (2R)-3-phospho-glyceroyl phosphate + ADP. It participates in carbohydrate degradation; glycolysis; pyruvate from D-glyceraldehyde 3-phosphate: step 2/5. This is Phosphoglycerate kinase from Chloroherpeton thalassium (strain ATCC 35110 / GB-78).